A 181-amino-acid chain; its full sequence is Biofilm-surface layer protein A (181 aa).

The N-terminal stretch at 1-28 (MKRKLLSSLAISALSLGLLVSAPTASFA) is a signal peptide.

The protein belongs to the BslA/BslB family. In terms of assembly, forms polymers.

It localises to the secreted. It is found in the cell wall. Involved in biofilm formation. Self-polymerizes and forms a layer on the surface of biofilms that confers hydrophobicity to the biofilm. The layer is stable and capable of resistance to high mechanical force compression. Required for complex colony architecture. May function synergistically with exopolysaccharides and TasA amyloid fibers to facilitate the assembly of the biofilm matrix. The polypeptide is Biofilm-surface layer protein A (Bacillus subtilis (strain 168)).